The sequence spans 553 residues: Hydroxylamine reductase (553 aa).

[2Fe-2S] cluster-binding residues include C3, C6, C18, and C25. Hybrid [4Fe-2O-2S] cluster-binding residues include H252, E276, C320, C408, C436, C461, E495, and K497. A Cysteine persulfide modification is found at C408.

The protein belongs to the HCP family. The cofactor is [2Fe-2S] cluster. Hybrid [4Fe-2O-2S] cluster is required as a cofactor.

Its subcellular location is the cytoplasm. The catalysed reaction is A + NH4(+) + H2O = hydroxylamine + AH2 + H(+). In terms of biological role, catalyzes the reduction of hydroxylamine to form NH(3) and H(2)O. This chain is Hydroxylamine reductase, found in Tolumonas auensis (strain DSM 9187 / NBRC 110442 / TA 4).